Reading from the N-terminus, the 165-residue chain is HTH-type transcriptional regulator MmpR5 (165 aa).

Residues 1 to 151 (MSVNDGVDQM…LLAYMENVVS (151 aa)) enclose the HTH marR-type domain. The H-T-H motif DNA-binding region spans 53-76 (SEELATALAASSGGISTNARMLIQ).

As to quaternary structure, homodimer.

Its function is as follows. Controls the expression level of the Mmps2-MmpL2, MmpS4-MmpL4, and MmpS5-MmpL5 transport systems. Also controls its own expression. Acts by binding directly to the promoter regions. This Mycobacterium tuberculosis (strain ATCC 25618 / H37Rv) protein is HTH-type transcriptional regulator MmpR5.